The following is a 61-amino-acid chain: Photosystem II reaction center protein Z (61 aa).

The next 2 helical transmembrane spans lie at 8–28 (ALLV…VLFS) and 41–61 (LVGS…SFFK).

It belongs to the PsbZ family. As to quaternary structure, PSII is composed of 1 copy each of membrane proteins PsbA, PsbB, PsbC, PsbD, PsbE, PsbF, PsbH, PsbI, PsbJ, PsbK, PsbL, PsbM, PsbT, PsbX, PsbY, PsbZ, Psb30/Ycf12, peripheral proteins PsbO, CyanoQ (PsbQ), PsbU, PsbV and a large number of cofactors. It forms dimeric complexes.

It localises to the cellular thylakoid membrane. May control the interaction of photosystem II (PSII) cores with the light-harvesting antenna, regulates electron flow through the 2 photosystem reaction centers. PSII is a light-driven water plastoquinone oxidoreductase, using light energy to abstract electrons from H(2)O, generating a proton gradient subsequently used for ATP formation. This Synechococcus sp. (strain JA-3-3Ab) (Cyanobacteria bacterium Yellowstone A-Prime) protein is Photosystem II reaction center protein Z.